The primary structure comprises 389 residues: COP9 signalosome complex subunit 11 (389 aa).

The region spanning 143-312 (QLIIDIPNLV…ILYQKFDPQM (170 aa)) is the PCI domain.

Component of a COP9 signalosome-like (CSN) complex.

It localises to the cytoplasm. Its subcellular location is the nucleus. Functionally, component of the COP9 signalosome (CSN) complex that acts as an regulator of the ubiquitin (Ubl) conjugation pathway by mediating the deneddylation of the cullin subunit of SCF-type E3 ubiquitin-protein ligase complexes The CSN complex is involved in the regulation of the mating pheromone response. PCI8 may also be involved in transcriptional and translational control. In Kluyveromyces lactis (strain ATCC 8585 / CBS 2359 / DSM 70799 / NBRC 1267 / NRRL Y-1140 / WM37) (Yeast), this protein is COP9 signalosome complex subunit 11 (PCI8).